We begin with the raw amino-acid sequence, 1536 residues long: MSQVWHNSNSQSNDVATSNDATGSNERNEKEPSLQGNKPGFVQQQQRITLPSLSALSTKEEDRRDSNGQQALTSHAAHILGYPPPHSNAMPSIATDSALKQPHEYHPRPKSSSSSPSINASLMNAGPAPLPTVGAASFSLSRFDNPLPIKAPVHTEEPKSYNGLQEEEKATQRPQDCKEVPAGVQPADAPDPSSNHADANDDNNNNENSHDEDADYRPLNVKDALSYLEQVKFQFSSRPDIYNLFLDIMKDFKSQAIDTPGVIERVSTLFRGYPILIQGFNTFLPQGYRIECSSNPDDPIRVTTPMGTTTVNNNISPSGRGTTDAQELGSFPESDGNGVQQPSNVPMVPSSVYQSEQNQDQQQSLPLLATSSGLPSIQQPEMPAHRQIPQSQSLVPQEDAKKNVDVEFSQAISYVNKIKTRFADQPDIYKHFLEILQTYQREQKPINEVYAQVTHLFQNAPDLLEDFKKFLPDSSASANQQVQHAQQHAQQQHEAQMHAQAQAQAQAQAQVEQQKQQQQFLYPASGYYGHPSNRGIPQQNLPPIGSFSPPTNGSTVHEAYQDQQHMQPPHFMPLPSIVQHGPNMVHQGIANENPPLSDLRTSLTEQYAPSSIQHQQQHPQSISPIANTQYGDIPVRPEIDLDPSIVPVVPEPTEPIENNISLNEEVTFFEKAKRYIGNKHLYTEFLKILNLYSQDILDLDDLVEKVDFYLGSNKELFTWFKNFVGYQEKTKCIENIVHEKHRLDLDLCEAFGPSYKRLPKSDTFMPCSGRDDMCWEVLNDEWVGHPVWASEDSGFIAHRKNQYEETLFKIEEERHEYDFYIESNLRTIQCLETIVNKIENMTENEKANFKLPPGLGHTSMTIYKKVIRKVYDKERGFEIIDALHEHPAVTAPVVLKRLKQKDEEWRRAQREWNKVWRELEQKVFFKSLDHLGLTFKQADKKLLTTKQLISEISSIKVDQTNKKIHWLTPKPKSQLDFDFPDKNIFYDILCLADTFITHTTAYSNPDKERLKDLLKYFISLFFSISFEKIEESLYSHKQNVSESSGSDDGSSIASRKRPYQQEMSLLDILHRSRYQKLKRSNDEDGKVPQLSEPPEEEPNTIEEEELIDEEAKNPWLTGNLVEEANSQGIIQNRSIFNLFANTNIYIFFRHWTTIYERLLEIKQMNERVTKEINTRSTVTFAKDLDLLSSQLSEMGLDFVGEDAYKQVLRLSRRLINGDLEHQWFEESLRQAYNNKAFKLYTIDKVTQSLVKHAHTLMTDAKTAEIMALFVKDRNASTTSAKDQIIYRLQVRSHMSNTENMFRIEFDKRTLHVSIQYIALDDLTLKEPKADEDKWKYYVTSYALPHPTEGIPHEKLKIPFLERLIEFGQDIDGTEVDEEFSPEGISVSTLKIKIQPITYQLHIENGSYDVFTRKATNKYPTIANDNTQKGMVSQKKELISKFLDCAVGLRNNLDEAQKLSMQKKWENLKDSIAKTSAGNQGIESETEKGKITKQEQSDNLDSSTASVLPASITTVPQDDNIETTGNTESSDKGAKIQ.

2 stretches are compositionally biased toward polar residues: residues M1–N25 and V42–S57. The segment at M1–A128 is disordered. S137 carries the phosphoserine modification. Residues I149–Y216 are disordered. Basic and acidic residues predominate over residues E166–E179. Positions S193–E207 are enriched in low complexity. The PAH 1 domain maps to R217–G287. Residues T303 and T304 each carry the phosphothreonine modification. A compositionally biased stretch (polar residues) spans T308 to A325. Residues T308–Q363 are disordered. A Phosphoserine modification is found at S316. The segment covering Q354–Q363 has biased composition (low complexity). One can recognise a PAH 2 domain in the interval V404–S474. 2 disordered regions span residues S475–V511 and A524–V556. The segment covering Q480–V511 has biased composition (low complexity). Residues I656 to Q727 enclose the PAH 3 domain. 3 disordered regions span residues K1037 to R1057, R1079 to D1108, and S1475 to Q1536. A compositionally biased stretch (low complexity) spans S1041–S1051. S1046 carries the phosphoserine modification. Residues P1093–D1108 are compositionally biased toward acidic residues. Positions E1484–Q1495 are enriched in basic and acidic residues. Polar residues predominate over residues S1496 to E1527.

In terms of assembly, component of the RPD3C(L) complex composed of at least ASH1, CTI6, DEP1, PHO23, RPD3, RXT2, RXT3, SAP30, SDS3, SIN3, UME1 and UME6. Component of the RPD3C(S) complex composed of at least EAF3, RCO1, RPD3, SIN3, and UME1. Interacts with ESS1 and STB1.

The protein resides in the nucleus. Its function is as follows. Catalytic component of the RPD3 histone deacetylase complexes RPD3C(L) and RPD3C(S) responsible for the deacetylation of lysine residues on the N-terminal part of the core histones (H2A, H2B, H3 and H4). Histone deacetylation gives a tag for epigenetic repression and plays an important role in transcriptional regulation, cell cycle progression and developmental events. SIN3 also has a RPD3 independent function required for normal longevity. The sequence is that of Transcriptional regulatory protein SIN3 (SIN3) from Saccharomyces cerevisiae (strain ATCC 204508 / S288c) (Baker's yeast).